The primary structure comprises 279 residues: Protein BASIC PENTACYSTEINE2 (279 aa).

The segment at 126 to 167 (TKKRKTNAKAGSTPKAKKPRKPKDENSNNNNNNNTNVTRVKP) is disordered. A compositionally biased stretch (low complexity) spans 152 to 161 (SNNNNNNNTN).

Belongs to the BBR/BPC family. In terms of tissue distribution, expressed in seedlings, leaves and pistils. Detected in the base of flowers and tips of carpels, in sepal and petal vasculature, in pollen grains, in young rosette, in the lateral and tip of primary roots, and in ovule at the exception of the outer integument.

It is found in the nucleus. Transcriptional regulator that specifically binds to GA-rich elements (GAGA-repeats) present in regulatory sequences of genes involved in developmental processes. This Arabidopsis thaliana (Mouse-ear cress) protein is Protein BASIC PENTACYSTEINE2.